The following is a 526-amino-acid chain: GMP synthase [glutamine-hydrolyzing] (526 aa).

A Glutamine amidotransferase type-1 domain is found at 9–208 (RILILDFGSQ…VMDICGCETL (200 aa)). The active-site Nucleophile is the C86. Catalysis depends on residues H182 and E184. The GMPS ATP-PPase domain maps to 209-401 (WTSSSIIEDA…LGLPYEMLYR (193 aa)). Position 236-242 (236-242 (SGGVDSS)) interacts with ATP.

In terms of assembly, homodimer.

The enzyme catalyses XMP + L-glutamine + ATP + H2O = GMP + L-glutamate + AMP + diphosphate + 2 H(+). The protein operates within purine metabolism; GMP biosynthesis; GMP from XMP (L-Gln route): step 1/1. Catalyzes the synthesis of GMP from XMP. This chain is GMP synthase [glutamine-hydrolyzing], found in Psychromonas ingrahamii (strain DSM 17664 / CCUG 51855 / 37).